Reading from the N-terminus, the 126-residue chain is Profilin-3 (126 aa).

This sequence belongs to the profilin family. Occurs in many kinds of cells as a complex with monomeric actin in a 1:1 ratio.

The protein localises to the cytoplasm. Its subcellular location is the cytoskeleton. In terms of biological role, binds to actin and affects the structure of the cytoskeleton. At high concentrations, profilin prevents the polymerization of actin, whereas it enhances it at low concentrations. By binding to PIP2, it inhibits the formation of IP3 and DG. This is Profilin-3 (proC) from Dictyostelium discoideum (Social amoeba).